We begin with the raw amino-acid sequence, 261 residues long: 5'-nucleotidase SurE (261 aa).

The a divalent metal cation site is built by Asp18, Asp19, Ser50, and Asn102.

Belongs to the SurE nucleotidase family. Requires a divalent metal cation as cofactor.

It localises to the cytoplasm. It carries out the reaction a ribonucleoside 5'-phosphate + H2O = a ribonucleoside + phosphate. Nucleotidase that shows phosphatase activity on nucleoside 5'-monophosphates. This is 5'-nucleotidase SurE from Rhodospirillum rubrum (strain ATCC 11170 / ATH 1.1.1 / DSM 467 / LMG 4362 / NCIMB 8255 / S1).